The chain runs to 242 residues: Thymocyte nuclear protein 1 (242 aa).

The interval 1-64 (MPWPSRKRDK…KKAKESDSGG (64 aa)) is disordered. Residues 6 to 10 (RKRDK) carry the Nuclear localization signal motif. Over residues 10-27 (KGAVADKKEPDAKIAKTE) the composition is skewed to basic and acidic residues. Acidic residues predominate over residues 28 to 37 (EETEDKEEEE).

Undergoes proteolytic processing during lymphocyte apoptosis. In terms of processing, phosphorylated. Expressed at high levels in bursa of fabricus, thymus and spleen. Also found in the liver, intestine, heart and brain.

It is found in the nucleus. In terms of biological role, specifically binds 5-hydroxymethylcytosine (5hmC), suggesting that it acts as a specific reader of 5hmC. This chain is Thymocyte nuclear protein 1 (THYN1), found in Gallus gallus (Chicken).